The chain runs to 56 residues: Small ribosomal subunit protein eS31 (56 aa).

Zn(2+) contacts are provided by C28, C31, C46, and C49. The segment at 28–49 (CPRCGPGVFMANHKDRWSCGRC) adopts a C4-type zinc-finger fold.

It belongs to the eukaryotic ribosomal protein eS31 family. Part of the 30S ribosomal subunit. Requires Zn(2+) as cofactor.

The protein is Small ribosomal subunit protein eS31 of Thermococcus gammatolerans (strain DSM 15229 / JCM 11827 / EJ3).